The following is a 115-amino-acid chain: MPTDHEEPCGPSHKSFCLNGGLCYVIPTIPSPFCRCVENYTGARCEEVFLPGSSIQTKSNLFEAFVALAVLVTLIIGAFYFLCRKGHFQRASSVQYDINLVETSSTSAHHSHEQH.

Residues 1 to 62 (MPTDHEEPCG…SSIQTKSNLF (62 aa)) are Extracellular-facing. The 42-residue stretch at 5–46 (HEEPCGPSHKSFCLNGGLCYVIPTIPSPFCRCVENYTGARCE) folds into the EGF-like domain. Intrachain disulfides connect cysteine 9/cysteine 23, cysteine 17/cysteine 34, and cysteine 36/cysteine 45. The N-linked (GlcNAc...) asparagine glycan is linked to asparagine 39. A helical membrane pass occupies residues 63–83 (EAFVALAVLVTLIIGAFYFLC). The Cytoplasmic portion of the chain corresponds to 84-115 (RKGHFQRASSVQYDINLVETSSTSAHHSHEQH).

The protein belongs to the neuregulin family. As to quaternary structure, interacts with ERBB4. Post-translationally, proteolytic cleavage close to the plasma membrane on the external face leads to the release of the soluble growth factor form. In terms of processing, extensive glycosylation precedes the proteolytic cleavage.

It localises to the cell membrane. It is found in the secreted. In terms of biological role, low affinity ligand for the ERBB4 tyrosine kinase receptor. Concomitantly recruits ERBB1 and ERBB2 coreceptors, resulting in ligand-stimulated tyrosine phosphorylation and activation of the ERBB receptors. Does not bind to the ERBB1, ERBB2 and ERBB3 receptors. In Homo sapiens (Human), this protein is Pro-neuregulin-4, membrane-bound isoform (NRG4).